The following is a 643-amino-acid chain: uncharacterized protein (643 aa).

Residues Phe-179 to Gln-199 are compositionally biased toward low complexity. Disordered regions lie at residues Phe-179 to Val-200 and Lys-349 to Asn-377.

This is an uncharacterized protein from Caenorhabditis elegans.